The following is a 262-amino-acid chain: Probable aminoglycoside 3'-phosphotransferase (262 aa).

Asp-187 (proton acceptor) is an active-site residue.

The protein belongs to the aminoglycoside phosphotransferase family.

The enzyme catalyses kanamycin A + ATP = kanamycin 3'-phosphate + ADP + H(+). The protein is Probable aminoglycoside 3'-phosphotransferase (ymdC) of Lactococcus lactis subsp. lactis (strain IL1403) (Streptococcus lactis).